The chain runs to 318 residues: Ornithine carbamoyltransferase (318 aa).

Carbamoyl phosphate-binding positions include 63–66, Gln90, Arg114, and 141–144; these read STRT and HPCQ. L-ornithine is bound by residues Asn172, Asp235, and 239–240; that span reads SM. Carbamoyl phosphate contacts are provided by residues 275–276 and Arg303; that span reads CL.

Belongs to the aspartate/ornithine carbamoyltransferase superfamily. OTCase family.

The protein resides in the cytoplasm. The enzyme catalyses carbamoyl phosphate + L-ornithine = L-citrulline + phosphate + H(+). The protein operates within amino-acid biosynthesis; L-arginine biosynthesis; L-arginine from L-ornithine and carbamoyl phosphate: step 1/3. Functionally, reversibly catalyzes the transfer of the carbamoyl group from carbamoyl phosphate (CP) to the N(epsilon) atom of ornithine (ORN) to produce L-citrulline. The polypeptide is Ornithine carbamoyltransferase (Prochlorococcus marinus (strain MIT 9313)).